Reading from the N-terminus, the 475-residue chain is Cytochrome c-552 (475 aa).

Positions 1–29 are cleaved as a signal peptide; the sequence is MSIKHWMSAPIAVATLFASQLLLAGSVLA. Residues 38–57 form a disordered region; the sequence is PRNDAFEQKHPDQYHSWKAT. Histidine 92 contributes to the heme c binding site. 3 residues coordinate heme: cysteine 120, cysteine 123, and lysine 124. The heme c site is built by cysteine 158, cysteine 161, histidine 162, cysteine 207, cysteine 210, and histidine 211. Ca(2+) is bound by residues glutamate 213, tyrosine 214, lysine 259, and glutamine 261. A substrate-binding site is contributed by tyrosine 214. Histidine 262 serves as a coordination point for substrate. Positions 273, 280, 283, 284, 299, 312, 315, 316, and 391 each coordinate heme c.

This sequence belongs to the cytochrome c-552 family. Ca(2+) is required as a cofactor. It depends on heme c as a cofactor.

It localises to the periplasm. The enzyme catalyses 6 Fe(III)-[cytochrome c] + NH4(+) + 2 H2O = 6 Fe(II)-[cytochrome c] + nitrite + 8 H(+). The protein operates within nitrogen metabolism; nitrate reduction (assimilation). Its function is as follows. Catalyzes the reduction of nitrite to ammonia, consuming six electrons in the process. This chain is Cytochrome c-552, found in Vibrio parahaemolyticus serotype O3:K6 (strain RIMD 2210633).